Reading from the N-terminus, the 215-residue chain is Fibroblast growth factor 17 (215 aa).

The N-terminal stretch at 1–22 (MYGINQRYLYISFHFFVVWCHA) is a signal peptide. N-linked (GlcNAc...) asparagine glycosylation occurs at Asn137.

This sequence belongs to the heparin-binding growth factors family.

It is found in the secreted. Functionally, involved in dorsal-ventral embryonic patterning, by promoting expression of bone morphogenetic protein (BMP) antagonists such as chd. Also involved in anterior-posterior neural patterning and in mesoderm induction. In Danio rerio (Zebrafish), this protein is Fibroblast growth factor 17 (fgf17).